Consider the following 297-residue polypeptide: Mitochondrial nicotinamide adenine dinucleotide transporter SLC25A52 (297 aa).

Solcar repeat units lie at residues 28 to 108, 116 to 200, and 209 to 296; these read VGEM…LSCL, PEFA…IKEH, and AHLV…LLKF. A run of 6 helical transmembrane segments spans residues 34–51, 85–105, 118–138, 179–199, 215–235, and 268–289; these read YLCGCCAAFNNVAITYPI, LPPLMQKTTTLALMFGLYEDL, FATHGVAAVLAGTAEAIFTPL, ILFRNGLSNVLFFGLRGPIKE, FIGGGLLGAMLGFLCFPINVV, and LFRGAHLNYHRSLISWGIINAT.

Belongs to the mitochondrial carrier (TC 2.A.29) family.

It is found in the mitochondrion inner membrane. It catalyses the reaction NAD(+)(in) = NAD(+)(out). Functionally, mitochondrial membrane carrier protein that mediates the import of NAD(+) into mitochondria. Compared to SLC25A51, SLC25A52-mediated transport is not essential for the import of NAD(+) in mitochondria. The transport mechanism, uniport or antiport, its electrogenicity and substrate selectivity, remain to be elucidated. The protein is Mitochondrial nicotinamide adenine dinucleotide transporter SLC25A52 of Homo sapiens (Human).